Consider the following 2897-residue polypeptide: Chromodomain-helicase-DNA-binding protein 9 (2897 aa).

The segment covering 173–201 has biased composition (polar residues); it reads QCTSLRSQQNRNNLNPGQNSLSQSKNFMN. 3 disordered regions span residues 173-265, 482-525, and 537-671; these read QCTS…CSVS, QRQP…KQEK, and AKER…SAPL. A Glycyl lysine isopeptide (Lys-Gly) (interchain with G-Cter in SUMO2) cross-link involves residue lysine 197. A compositionally biased stretch (low complexity) spans 220–235; that stretch reads SNSQQSISMQQFSQTS. Polar residues-rich tracts occupy residues 247-260 and 484-506; these read HQEGNFNGPSPNMT and QPPSSKKSDGSGTYTKLQNTQVR. Lysine 499 carries the N6-acetyllysine modification. Basic and acidic residues predominate over residues 508–525; the sequence is MSEKKQRKKVESESKQEK. Serine 550 is subject to Phosphoserine. Over residues 573 to 593 the composition is skewed to basic and acidic residues; that stretch reads KPKDKDSKKTKTCSKLKEKTK. Lysine 596 is covalently cross-linked (Glycyl lysine isopeptide (Lys-Gly) (interchain with G-Cter in SUMO2)). Serine 611 carries the phosphoserine modification. The segment covering 634–644 has biased composition (basic residues); it reads RRSNRQIKRKK. Residues 645-660 show a composition bias toward basic and acidic residues; it reads YAEDIEGKQSEEEVKG. Chromo domains are found at residues 690-761 and 773-839; these read AIVD…HFFA and VEVD…RLDR. Residues 868 to 872 carry the LXXLL motif 1 motif; sequence LNWLL. In terms of domain architecture, Helicase ATP-binding spans 872–1046; sequence LFNWYNRRNC…FSLLHFLEPL (175 aa). 885 to 892 contributes to the ATP binding site; it reads DEMGLGKT. A DEAH box motif is present at residues 997–1000; the sequence is DEAH. The LXXLL motif 2 signature appears at 1036–1040; sequence LFSLL. The Helicase C-terminal domain occupies 1186-1337; sequence LIDKLLPKMK…KAVLQSMSGR (152 aa). Positions 1461–1484 are disordered; that stretch reads KDELAELSEAESEGDEKPKLRRPC. Residues 1465–1474 are compositionally biased toward acidic residues; it reads AELSEAESEG. Serine 1468 and serine 1472 each carry phosphoserine. Basic and acidic residues predominate over residues 1475–1484; it reads DEKPKLRRPC. Glycyl lysine isopeptide (Lys-Gly) (interchain with G-Cter in SUMO2) cross-links involve residues lysine 1588, lysine 1738, and lysine 1903. At serine 2026 the chain carries Phosphoserine. Positions 2031 to 2035 match the LXXLL motif 3 motif; it reads LPRLL. Lysine 2038 is covalently cross-linked (Glycyl lysine isopeptide (Lys-Gly) (interchain with G-Cter in SUMO2)). Disordered regions lie at residues 2050 to 2238 and 2305 to 2337; these read ENLK…QMNN and GAATEYSDPSVPTPPGAGVKEEHDQSTQMSKVK. A phosphoserine mark is found at serine 2058 and serine 2059. Lysine 2074 participates in a covalent cross-link: Glycyl lysine isopeptide (Lys-Gly) (interchain with G-Cter in SUMO2). 2 positions are modified to phosphoserine: serine 2075 and serine 2079. Residues 2094–2104 show a composition bias toward basic and acidic residues; it reads SGGKCETDRRM. Residues 2141–2193 show a composition bias toward low complexity; it reads SSCSSRSSSSSSSSSCSHSRSGSSSSSSSSCSSASSSSSSSTSSSSSSSSSSS. Residues 2203 to 2216 are compositionally biased toward basic and acidic residues; the sequence is AQKRESTTHMKAYD. The segment covering 2221–2238 has biased composition (polar residues); sequence ASLSTTQDETQDSFQMNN. Positions 2332–2481 are binds A/T-rich DNA; that stretch reads QMSKVKKHVR…LSYTQPQGIP (150 aa). Glycyl lysine isopeptide (Lys-Gly) (interchain with G-Cter in SUMO2) cross-links involve residues lysine 2350, lysine 2356, and lysine 2361. The a.T hook-like stretch occupies residues 2429–2436; that stretch reads KKRRGRRK. Positions 2721 to 2725 match the LXXLL motif 4 motif; sequence LPNLL. Positions 2729 to 2777 are disordered; the sequence is GLLTKPTESGTEDKKGSDSKESEGKTERTESQSSENGGENSVSSSPSTS. Residues 2739-2758 are compositionally biased toward basic and acidic residues; the sequence is TEDKKGSDSKESEGKTERTE. Positions 2759 to 2777 are enriched in low complexity; that stretch reads SQSSENGGENSVSSSPSTS. The LXXLL motif 5 signature appears at 2793–2797; it reads LNPLL. Residues 2827–2897 form a disordered region; that stretch reads VQNKNSDLGS…SEDSDSSNED (71 aa). Over residues 2840-2857 the composition is skewed to basic and acidic residues; that stretch reads VEVKEEDSRIKDQEDKGG. Lysine 2843 is covalently cross-linked (Glycyl lysine isopeptide (Lys-Gly) (interchain with G-Cter in SUMO2)). Positions 2877–2888 are enriched in low complexity; sequence ASSGSDSTSSSS.

This sequence belongs to the SNF2/RAD54 helicase family. As to quaternary structure, interacts with PPARA. Probably interacts with ESR1 and NR1I3. Phosphorylated on serine and tyrosine residues. Widely expressed at low levels. In bone marrow, expression is restricted to osteoprogenitor cells adjacent to mature osteoblasts.

The protein localises to the cytoplasm. The protein resides in the nucleus. It catalyses the reaction ATP + H2O = ADP + phosphate + H(+). Probable ATP-dependent chromatin-remodeling factor. Acts as a transcriptional coactivator for PPARA and possibly other nuclear receptors. Has DNA-dependent ATPase activity and binds to A/T-rich DNA. Associates with A/T-rich regulatory regions in promoters of genes that participate in the differentiation of progenitors during osteogenesis. The polypeptide is Chromodomain-helicase-DNA-binding protein 9 (CHD9) (Homo sapiens (Human)).